A 127-amino-acid chain; its full sequence is MATKLAYRGSEPTKFKKTKIKKDDEVLVISGKEKGKKGKVLAVDKRKDRVYIEGVNKRKRFVRPTQENPGGGAIEIEFPIHISNVMFHDAKAENKAKPKKKIKAVRLGFAKKDGKSVRVTRPEGKEV.

This sequence belongs to the universal ribosomal protein uL24 family. Part of the 50S ribosomal subunit.

Functionally, one of two assembly initiator proteins, it binds directly to the 5'-end of the 23S rRNA, where it nucleates assembly of the 50S subunit. Its function is as follows. One of the proteins that surrounds the polypeptide exit tunnel on the outside of the subunit. The chain is Large ribosomal subunit protein uL24 from Leptospira biflexa serovar Patoc (strain Patoc 1 / ATCC 23582 / Paris).